The primary structure comprises 374 residues: Translocating chain-associated membrane protein 1 (374 aa).

The Cytoplasmic segment spans residues Met1 to Met32. A helical transmembrane segment spans residues Leu33 to Leu53. At Gln54–Ala81 the chain is on the lumenal side. N-linked (GlcNAc...) asparagine glycosylation is present at Asn56. The helical transmembrane segment at Thr82–Leu102 threads the bilayer. Over Asp103–Glu121 the chain is Cytoplasmic. In terms of domain architecture, TLC spans Ser117–His326. A helical membrane pass occupies residues Ser122 to Ser142. The Lumenal segment spans residues Glu143–Asn159. The chain crosses the membrane as a helical span at residues Leu160 to Phe180. Over Pro181–Asp192 the chain is Cytoplasmic. The chain crosses the membrane as a helical span at residues Ile193 to Leu213. Position 214 (Asn214) is a topological domain, lumenal. A helical transmembrane segment spans residues Leu215–Ile235. Over Ser236 to Ser251 the chain is Cytoplasmic. A helical membrane pass occupies residues Leu252–Val272. The Lumenal portion of the chain corresponds to Gly273–Arg297. A helical transmembrane segment spans residues Ile298 to Phe318. Residues Gln319–Ser374 lie on the Cytoplasmic side of the membrane. The interval Pro333–Ser374 is disordered. A compositionally biased stretch (basic residues) spans Val334 to Arg347. Positions Asn352 to Ala363 are enriched in polar residues. At Ser365 the chain carries Phosphoserine.

It belongs to the TRAM family. Interacts with SEC61B. May interact with Derlin-1/DERL1. N-glycosylated.

It localises to the endoplasmic reticulum membrane. Its function is as follows. Involved in the translocation of nascent protein chains into or through the endoplasmic reticulum (ER) membrane by facilitating the proper chain positioning at the SEC61 channel. Regulates the exposure of nascent secretory protein chain to the cytosol during translocation into the ER. May affect the phospholipid bilayer in the vicinity of the lateral gate of the SEC61 channel, thereby facilitating ER protein transport. Intimately associates with transmembrane (TM) domain of nascent membrane proteins during the entire integration process into the ER membrane. Associates with the second TM domain of G-protein-coupled receptor opsin/OPSD nascent chain in the ER membrane, which may facilitate its integration into the membrane. Under conditions of ER stress, participates in the disposal of misfolded ER membrane proteins during the unfolded protein response (UPR), an integrated stress response (ISR) pathway, by selectively retrotranslocating misfolded ER-membrane proteins from the ER into the cytosol where they are ubiquitinated and degraded by the proteasome. This chain is Translocating chain-associated membrane protein 1, found in Rattus norvegicus (Rat).